Here is a 348-residue protein sequence, read N- to C-terminus: Uroporphyrinogen decarboxylase (348 aa).

Substrate is bound by residues 27-31 (RQAGR), F46, D76, Y152, S207, and H320.

It belongs to the uroporphyrinogen decarboxylase family. As to quaternary structure, homodimer.

The protein localises to the cytoplasm. It catalyses the reaction uroporphyrinogen III + 4 H(+) = coproporphyrinogen III + 4 CO2. The protein operates within porphyrin-containing compound metabolism; protoporphyrin-IX biosynthesis; coproporphyrinogen-III from 5-aminolevulinate: step 4/4. Catalyzes the decarboxylation of four acetate groups of uroporphyrinogen-III to yield coproporphyrinogen-III. This is Uroporphyrinogen decarboxylase from Bacillus cytotoxicus (strain DSM 22905 / CIP 110041 / 391-98 / NVH 391-98).